A 1254-amino-acid chain; its full sequence is Structural polyprotein (1254 aa).

Residues 1 to 33 are necessary for nucleocapsid assembly and virus assembly; sequence MFPFQPMYPMQPMPYRNPFAAPRRPWFPRTDPF. The host transcription inhibition stretch occupies residues 33 to 68; that stretch reads FLAMQVQELTRSMANLTFKQRRDAPPEGPSAKKPKK. Positions 41 to 48 match the Supraphysiological nuclear export signal motif; it reads LTRSMANL. A disordered region spans residues 45–119; the sequence is MANLTFKQRR…KKPGKRQRMV (75 aa). The Nuclear localization signal signature appears at 64–68; sequence KKPKK. Basic residues predominate over residues 80–92; sequence GKKKKNQGKKKAK. Residues 91-127 are binding to the viral RNA; sequence AKTGPPNPKAQNGNKKKTNKKPGKRQRMVMKLESDKT. A phosphothreonine mark is found at Thr93 and Thr108. Basic residues predominate over residues 104 to 118; that stretch reads NKKKTNKKPGKRQRM. Residues 112–126 form a ribosome-binding region; the sequence is PGKRQRMVMKLESDK. Phosphoserine is present on Ser124. The Peptidase S3 domain maps to 126–275; sequence KTFPIMLEGK…KYTPENCEQW (150 aa). At Thr127 the chain carries Phosphothreonine. Active-site charge relay system residues include His152, Asp174, and Ser226. The tract at residues 276-287 is functions as an uncleaved signal peptide for the precursor of protein E3/E2; that stretch reads SLVTTMCLLANV. Residues 276–701 lie on the Extracellular side of the membrane; the sequence is SLVTTMCLLA…HYYHRYPMST (426 aa). 3 N-linked (GlcNAc...) asparagine; by host glycosylation sites follow: Asn286, Asn546, and Asn652. A helical membrane pass occupies residues 702-722; sequence ILGLSICAAIATVSVAASTWL. The Cytoplasmic segment spans residues 723-757; it reads FCRSRVACLTPYRLTPNARIPFCLAVLCCARTARA. S-palmitoyl cysteine; by host attachment occurs at residues Cys730, Cys750, and Cys751. The segment at 730-750 is transient transmembrane before p62-6K protein processing; it reads CLTPYRLTPNARIPFCLAVLC. Over 758-772 the chain is Extracellular; sequence ETTWESLDHLWNNNQ. A helical transmembrane segment spans residues 773 to 793; it reads QMFWIQLLIPLAALIVVTRLL. The Cytoplasmic segment spans residues 794 to 795; the sequence is RC. Residues 796–816 form a helical membrane-spanning segment; sequence VCCVVPFLVMAGAAAGAYEHA. Residues 817–1224 lie on the Extracellular side of the membrane; it reads TTMPSQAGIS…SKTAWTWLTS (408 aa). 4 disulfide bridges follow: Cys861–Cys926, Cys874–Cys906, Cys875–Cys908, and Cys880–Cys890. Positions 896–913 are E1 fusion peptide loop; the sequence is VYPFMWGGAYCFCDTENT. An N-linked (GlcNAc...) asparagine; by host glycan is attached at Asn946. Cystine bridges form between Cys1071-Cys1083, Cys1113-Cys1188, Cys1118-Cys1192, and Cys1140-Cys1182. Residues 1225 to 1245 traverse the membrane as a helical segment; sequence LLGGSAVIIIIGLVLATIVAM. Topologically, residues 1246–1254 are cytoplasmic; that stretch reads YVLTNQKHN.

In terms of assembly, homodimer. Homomultimer. Interacts with host karyopherin KPNA4; this interaction allows the nuclear import of the viral capsid protein. Interacts with spike glycoprotein E2. Interacts with host IRAK1; the interaction leads to inhibition of IRAK1-dependent signaling. Part of a tetrameric complex composed of host CRM1, host importin alpha/beta dimer and the viral capsid; this complex blocks the receptor-mediated transport through the nuclear pore. Interacts with host phosphatase PPP1CA; this interaction dephosphorylates the capsid protein, which increases its ability to bind to the viral genome. The precursor of protein E3/E2 and E1 form a heterodimer shortly after synthesis. As to quaternary structure, interacts with spike glycoprotein E2. The precursor of protein E3/E2 and E1 form a heterodimer shortly after synthesis. Processing of the precursor of protein E3/E2 into E2 and E3 results in a heterodimer of the spike glycoproteins E2 and E1. Spike at virion surface are constituted of three E2-E1 heterodimers. After target cell attachment and endocytosis, E1 change conformation to form homotrimers. Interacts with 6K protein. Interacts with host LDLRAD3; this interaction mediates viral entry to the host cell. In terms of assembly, interacts with spike glycoprotein E1. Processing of the precursor of protein E3/E2 into E2 and E3 results in a heterodimer of the spike glycoproteins E2 and E1. Spike at virion surface are constituted of a trimer of E2-E1 heterodimers. Interacts with 6K protein. Interacts with host LDLRAD3; this interaction mediates viral entry to the host cell. Oligomer. Interacts with spike glycoprotein E1. Interacts with spike glycoprotein E2. Structural polyprotein: Specific enzymatic cleavages in vivo yield mature proteins. Capsid protein is auto-cleaved during polyprotein translation, unmasking a signal peptide at the N-terminus of the precursor of E3/E2. The remaining polyprotein is then targeted to the host endoplasmic reticulum, where host signal peptidase cleaves it into pE2, 6K and E1 proteins. pE2 is further processed to mature E3 and E2 by host furin in trans-Golgi vesicle. Post-translationally, palmitoylated via thioester bonds. These palmitoylations may induce disruption of the C-terminus transmembrane. This would result in the reorientation of E2 C-terminus from lumenal to cytoplasmic side. In terms of processing, phosphorylated on serine and threonine residues. N-glycosylated. Post-translationally, palmitoylated via thioester bonds.

Its subcellular location is the virion. The protein localises to the host cytoplasm. It is found in the host cell membrane. The protein resides in the host nucleus. It localises to the virion membrane. It carries out the reaction Autocatalytic release of the core protein from the N-terminus of the togavirus structural polyprotein by hydrolysis of a -Trp-|-Ser- bond.. Functionally, forms an icosahedral capsid with a T=4 symmetry composed of 240 copies of the capsid protein surrounded by a lipid membrane through which penetrate 80 spikes composed of trimers of E1-E2 heterodimers. The capsid protein binds to the viral RNA genome at a site adjacent to a ribosome binding site for viral genome translation following genome release. Possesses a protease activity that results in its autocatalytic cleavage from the nascent structural protein. Following its self-cleavage, the capsid protein transiently associates with ribosomes, and within several minutes the protein binds to viral RNA and rapidly assembles into icosahedric core particles. The resulting nucleocapsid eventually associates with the cytoplasmic domain of the spike glycoprotein E2 at the cell membrane, leading to budding and formation of mature virions. In case of infection, new virions attach to target cells and after clathrin-mediated endocytosis their membrane fuses with the host endosomal membrane. This leads to the release of the nucleocapsid into the cytoplasm, followed by an uncoating event necessary for the genomic RNA to become accessible. The uncoating might be triggered by the interaction of capsid proteins with ribosomes. Binding of ribosomes would release the genomic RNA since the same region is genomic RNA-binding and ribosome-binding. Specifically inhibits interleukin-1 receptor-associated kinase 1/IRAK1-dependent signaling during viral entry, representing a means by which the alphaviruses may evade innate immune detection and activation prior to viral gene expression. Inhibits host transcription. Forms a tetrameric complex with XPO1/CRM1 and the nuclear import receptor importin. This complex blocks the central channel of host nuclear pores thereby inhibiting the receptor-mediated nuclear transport and thus the host mRNA and rRNA transcription. The inhibition of transcription is linked to a cytopathic effect on the host cell. Provides the signal sequence for the translocation of the precursor of protein E3/E2 to the host endoplasmic reticulum. Furin-cleaved E3 remains associated with spike glycoprotein E1 and mediates pH protection of the latter during the transport via the secretory pathway. After virion release from the host cell, the assembly protein E3 is gradually released in the extracellular space. In terms of biological role, plays a role in viral attachment to target host cell, by binding to the cell receptor LDLRAD3. Synthesized as a p62 precursor which is processed by furin at the cell membrane just before virion budding, giving rise to E2-E1 heterodimer. The p62-E1 heterodimer is stable, whereas E2-E1 is unstable and dissociate at low pH. p62 is processed at the last step, presumably to avoid E1 fusion activation before its final export to cell surface. E2 C-terminus contains a transitory transmembrane that would be disrupted by palmitoylation, resulting in reorientation of the C-terminal tail from lumenal to cytoplasmic side. This step is critical since E2 C-terminus is involved in budding by interacting with capsid proteins. This release of E2 C-terminus in cytoplasm occurs lately in protein export, and precludes premature assembly of particles at the endoplasmic reticulum membrane. Its function is as follows. Acts as a viroporin that participates in virus glycoprotein processing and transport to the plasma membrane, cell permeabilization and budding of viral particles. Disrupts the calcium homeostasis of the cell, probably at the endoplasmic reticulum level. This leads to cytoplasmic calcium elevation. Because of its lipophilic properties, the 6K protein is postulated to influence the selection of lipids that interact with the transmembrane domains of the glycoproteins, which, in turn, affects the deformability of the bilayer required for the extreme curvature that occurs as budding proceeds. Present in low amount in virions, about 3% compared to viral glycoproteins. Functionally, class II viral fusion protein. Fusion activity is inactive as long as E1 is bound to E2 in mature virion. After virus attachment to cell receptor LDLRAD3 and endocytosis, acidification of the endosome would induce dissociation of E1/E2 heterodimer and concomitant trimerization of the E1 subunits. This E1 trimer is fusion active, and promotes release of viral nucleocapsid in cytoplasm after endosome and viral membrane fusion. Efficient fusion requires the presence of cholesterol and sphingolipid in the target membrane. Fusion is optimal at levels of about 1 molecule of cholesterol per 2 molecules of phospholipids, and is specific for sterols containing a 3-beta-hydroxyl group. The polypeptide is Structural polyprotein (Bos taurus (Bovine)).